Reading from the N-terminus, the 113-residue chain is UPF0122 protein MGAS10270_Spy1030 (113 aa).

Belongs to the UPF0122 family.

Functionally, might take part in the signal recognition particle (SRP) pathway. This is inferred from the conservation of its genetic proximity to ftsY/ffh. May be a regulatory protein. The protein is UPF0122 protein MGAS10270_Spy1030 of Streptococcus pyogenes serotype M2 (strain MGAS10270).